The chain runs to 491 residues: Ketol-acid reductoisomerase (NADP(+)) (491 aa).

One can recognise a KARI N-terminal Rossmann domain in the interval 15-208 (AQLGKCRFMG…GGHRAGVLES (194 aa)). NADP(+) is bound by residues 45-48 (CGAQ), arginine 68, arginine 76, serine 78, and 108-110 (DKQ). The active site involves histidine 132. Glycine 158 contacts NADP(+). 2 KARI C-terminal knotted domains span residues 209 to 344 (SFVA…TAPQ) and 345 to 484 (YEGK…MTDM). 4 residues coordinate Mg(2+): aspartate 217, glutamate 221, glutamate 389, and glutamate 393. Residue serine 414 coordinates substrate.

The protein belongs to the ketol-acid reductoisomerase family. Requires Mg(2+) as cofactor.

It catalyses the reaction (2R)-2,3-dihydroxy-3-methylbutanoate + NADP(+) = (2S)-2-acetolactate + NADPH + H(+). The enzyme catalyses (2R,3R)-2,3-dihydroxy-3-methylpentanoate + NADP(+) = (S)-2-ethyl-2-hydroxy-3-oxobutanoate + NADPH + H(+). It functions in the pathway amino-acid biosynthesis; L-isoleucine biosynthesis; L-isoleucine from 2-oxobutanoate: step 2/4. It participates in amino-acid biosynthesis; L-valine biosynthesis; L-valine from pyruvate: step 2/4. Its function is as follows. Involved in the biosynthesis of branched-chain amino acids (BCAA). Catalyzes an alkyl-migration followed by a ketol-acid reduction of (S)-2-acetolactate (S2AL) to yield (R)-2,3-dihydroxy-isovalerate. In the isomerase reaction, S2AL is rearranged via a Mg-dependent methyl migration to produce 3-hydroxy-3-methyl-2-ketobutyrate (HMKB). In the reductase reaction, this 2-ketoacid undergoes a metal-dependent reduction by NADPH to yield (R)-2,3-dihydroxy-isovalerate. The protein is Ketol-acid reductoisomerase (NADP(+)) of Klebsiella pneumoniae (strain 342).